Reading from the N-terminus, the 687-residue chain is Putative mitochondrial carnitine O-acetyltransferase (687 aa).

His-346 (proton acceptor) is an active-site residue. A CoA-binding site is contributed by Gly-446–Asp-459. Tyr-481 and Thr-494 together coordinate (R)-carnitine. Position 517 is a phosphoserine (Ser-517).

Belongs to the carnitine/choline acetyltransferase family.

The protein resides in the mitochondrion inner membrane. It carries out the reaction (R)-carnitine + acetyl-CoA = O-acetyl-(R)-carnitine + CoA. Functionally, involved in the transfer of acetyl-CoA into mitochondria. May also be involved in the metabolism of acetate and of ethanol. This chain is Putative mitochondrial carnitine O-acetyltransferase (YAT1), found in Saccharomyces cerevisiae (strain ATCC 204508 / S288c) (Baker's yeast).